A 401-amino-acid polypeptide reads, in one-letter code: Probable 2,3-bisphosphoglycerate-independent phosphoglycerate mutase (401 aa).

It belongs to the BPG-independent phosphoglycerate mutase family. A-PGAM subfamily.

It catalyses the reaction (2R)-2-phosphoglycerate = (2R)-3-phosphoglycerate. It functions in the pathway carbohydrate degradation; glycolysis; pyruvate from D-glyceraldehyde 3-phosphate: step 3/5. Catalyzes the interconversion of 2-phosphoglycerate and 3-phosphoglycerate. The sequence is that of Probable 2,3-bisphosphoglycerate-independent phosphoglycerate mutase from Thermotoga petrophila (strain ATCC BAA-488 / DSM 13995 / JCM 10881 / RKU-1).